We begin with the raw amino-acid sequence, 484 residues long: NADH-ubiquinone oxidoreductase chain 4 (484 aa).

The next 14 membrane-spanning stretches (helical) occupy residues 1–21 (MLTLLLIIPLVGALMLAPMQG), 33–53 (LALGTSLINFVLSIVLWGEFD), 77–97 (VDGISLYFVLLTTFITPICIL), 109–129 (YFLMCFLVLETLLIAVFVVLD), 130–150 (ILLFYVFFESVLIPLFLIVGI), 162–182 (FLLFLYTLFGSLFMLLAFLVI), 206–226 (LLWLAVFISMAIKTPLLPFHV), 236–256 (PLAGSVILAGLILKLATYGYM), 270–290 (FSPLVQTIAVITLIYASLATL), 295–315 (FKALVAYSSIGHMAVVVLGLF), 326–346 (LLLSIAHGVVSPALFILVGGV), 365–385 (YMPLFSIMFFVFTIFNAAVPL), 405–425 (VFAVLGSTGIVLSAAYSIWLY), and 448–468 (FMLLLPLLFVAVVFGIFPNII).

It belongs to the complex I subunit 4 family.

It localises to the mitochondrion inner membrane. It catalyses the reaction a ubiquinone + NADH + 5 H(+)(in) = a ubiquinol + NAD(+) + 4 H(+)(out). Its function is as follows. Core subunit of the mitochondrial membrane respiratory chain NADH dehydrogenase (Complex I) that is believed to belong to the minimal assembly required for catalysis. Complex I functions in the transfer of electrons from NADH to the respiratory chain. The immediate electron acceptor for the enzyme is believed to be ubiquinone. In Mycosarcoma maydis (Corn smut fungus), this protein is NADH-ubiquinone oxidoreductase chain 4 (ND4).